Here is a 207-residue protein sequence, read N- to C-terminus: Octanoyltransferase (207 aa).

A BPL/LPL catalytic domain is found at 27 to 203; the sequence is ASTEDELWVV…HLETQFTPKA (177 aa). Residues 66–73, 133–135, and 146–148 contribute to the substrate site; these read RGGQITYH, SLG, and GLA. The active-site Acyl-thioester intermediate is the Cys164.

Belongs to the LipB family.

It is found in the cytoplasm. It catalyses the reaction octanoyl-[ACP] + L-lysyl-[protein] = N(6)-octanoyl-L-lysyl-[protein] + holo-[ACP] + H(+). It functions in the pathway protein modification; protein lipoylation via endogenous pathway; protein N(6)-(lipoyl)lysine from octanoyl-[acyl-carrier-protein]: step 1/2. In terms of biological role, catalyzes the transfer of endogenously produced octanoic acid from octanoyl-acyl-carrier-protein onto the lipoyl domains of lipoate-dependent enzymes. Lipoyl-ACP can also act as a substrate although octanoyl-ACP is likely to be the physiological substrate. The chain is Octanoyltransferase from Neisseria meningitidis serogroup C / serotype 2a (strain ATCC 700532 / DSM 15464 / FAM18).